The chain runs to 223 residues: MKFVAFERAKQGTGASRRLRITGRTPGIVYGGGAEPQQIEIDHNALWHALKKEAFHAAVLDMELDGKDNKVLLRDVQMHPFKQLILHVDFQRVDASTRLHMKVPLHYSGDENSPAVKTEGCIANHVITEIEVLCLPTDLPEFIAVDLSGLKKGASLHLADVALPKGVTAVTRGNKNPVLVSVVVIGAAEAPVAEAGAAPVAAAAPAAAGKAAPAAKAPAAKKK.

This sequence belongs to the bacterial ribosomal protein bL25 family. CTC subfamily. Part of the 50S ribosomal subunit; part of the 5S rRNA/L5/L18/L25 subcomplex. Contacts the 5S rRNA. Binds to the 5S rRNA independently of L5 and L18.

Functionally, this is one of the proteins that binds to the 5S RNA in the ribosome where it forms part of the central protuberance. In Albidiferax ferrireducens (strain ATCC BAA-621 / DSM 15236 / T118) (Rhodoferax ferrireducens), this protein is Large ribosomal subunit protein bL25.